We begin with the raw amino-acid sequence, 316 residues long: MIKAVQSPPTPYLQFSRKQWAALRNSVPLTLTEAEIVNLKGINEDLSLEEVAEIYLPLSRLLNFYISSNLRRQAVLEQFLGTDGQRIPYIIGIAGSVAVGKSTTARVLQALLSRWPEHRTVELVTTDGFLHPNSVLKQRDLMKKKGFPESYDIRSLVNFVSKVKSGTPRVTAPVYSHLIYDVVPDEQKVISQPDILILEGLNVLQSGSDYNHDPHHVFVSDFVDFSIYVDAPETLLQSWYINRFLKFRQGAFSDPDSYFHHYSQLSEQEAVAIASQLWSEINGRNLQQNILPTRERASLILGKSANHAVERVRLRK.

Residue Gly-95–Ser-102 participates in ATP binding.

It belongs to the prokaryotic pantothenate kinase family.

The protein resides in the cytoplasm. It carries out the reaction (R)-pantothenate + ATP = (R)-4'-phosphopantothenate + ADP + H(+). It participates in cofactor biosynthesis; coenzyme A biosynthesis; CoA from (R)-pantothenate: step 1/5. The polypeptide is Pantothenate kinase (Sodalis glossinidius (strain morsitans)).